Consider the following 415-residue polypeptide: Mitogen-activated protein kinase mpkC (415 aa).

Positions 20–299 (YANLQPVGLG…AEQGLMHPWM (280 aa)) constitute a Protein kinase domain. ATP contacts are provided by residues 26–34 (VGLGTAGVV) and lysine 49. Residue aspartate 141 is the Proton acceptor of the active site. Threonine 171 bears the Phosphothreonine mark. The short motif at 171-173 (TGY) is the TXY element. Tyrosine 173 is modified (phosphotyrosine).

The protein belongs to the protein kinase superfamily. Ser/Thr protein kinase family. MAP kinase subfamily. HOG1 sub-subfamily. The cofactor is Mg(2+). Dually phosphorylated on Thr-171 and Tyr-173, which activates the enzyme.

The catalysed reaction is L-seryl-[protein] + ATP = O-phospho-L-seryl-[protein] + ADP + H(+). It carries out the reaction L-threonyl-[protein] + ATP = O-phospho-L-threonyl-[protein] + ADP + H(+). Activated by tyrosine and threonine phosphorylation. Mitogen-activated protein kinase required for growth on media where sorbitol or mannitol is the sole carbon source. This chain is Mitogen-activated protein kinase mpkC (mpkC), found in Emericella nidulans (strain FGSC A4 / ATCC 38163 / CBS 112.46 / NRRL 194 / M139) (Aspergillus nidulans).